Here is a 704-residue protein sequence, read N- to C-terminus: Rabphilin-3A (704 aa).

Positions 1 to 12 (MTDTVFSSSSSR) are enriched in polar residues. Residues 1-52 (MTDTVFSSSSSRWMCPSDRPLQSNDKEQLQTGWSVHPSGQPDRQRKQEELTD) form a disordered region. The RabBD domain maps to 44–161 (QRKQEELTDE…KRSGAWFFKG (118 aa)). The FYVE-type zinc finger occupies 92–149 (GDGVNRCILCGEQLGMLGSACVVCEDCKKNVCTKCGVETSNNRPHPVWLCKICIEQRE). The Zn(2+) site is built by C98, C101, C115, C118, C123, C126, C141, and C144. A disordered region spans residues 167–398 (LPQPMPIKKN…EEEANSYDSD (232 aa)). Positions 205–214 (TRGDTEDRRG) are enriched in basic and acidic residues. At R229 the chain carries Omega-N-methylarginine. S277 bears the Phosphoserine mark. The segment covering 279–290 (QASRPAPASMQS) has biased composition (low complexity). Over residues 291–310 (PAPPQPGQPGPPGGSRPSPG) the composition is skewed to pro residues. Over residues 366–380 (QASAAAPQPVVASAR) the composition is skewed to low complexity. Over residues 385-398 (PEEDEEEANSYDSD) the composition is skewed to acidic residues. One can recognise a C2 1 domain in the interval 402–524 (TLGALEFSLL…KPNQRKNFNI (123 aa)). Residues M432, D433, D439, D494, E495, D496, E502, E549, D591, D597, D651, Y652, D653, and D659 each contribute to the Ca(2+) site. In terms of domain architecture, C2 2 spans 560 to 693 (ERGKILVSLM…NKDKKIERWH (134 aa)). Phosphoserine is present on residues S702 and S703.

As to quaternary structure, interacts with RAB3B, RAB3C, RAB3D, RAB8A, RAB27A and RAB27B. Interacts with RAB3A; this interaction recruits RPH3A to synaptic vesicules. Interacts (via C2B domain) with SNAP25. Interacts with deubiquitinating enzyme CAND1; this interaction results in the deubiquitination of RPH3A. Interacts with GRIN2A and DLG4; this ternary complex regulates NMDA receptor composition at postsynaptic membranes. Interacts with SNCA. It depends on Ca(2+) as a cofactor. Ubiquitinated. Deubiquitinated by CAND1 to prevent its degradation. In terms of tissue distribution, specifically expressed in brain.

Its subcellular location is the cytoplasmic vesicle. It localises to the secretory vesicle. The protein resides in the synaptic vesicle membrane. It is found in the cell projection. The protein localises to the dendritic spine. Its subcellular location is the postsynaptic cell membrane. It localises to the membrane. In terms of biological role, plays an essential role in docking and fusion steps of regulated exocytosis. At the presynaptic level, RPH3A is recruited by RAB3A to the synaptic vesicle membrane in a GTP-dependent manner where it modulates synaptic vesicle trafficking and calcium-triggered neurotransmitter release. In the post-synaptic compartment, forms a ternary complex with GRIN2A and DLG4 and regulates NMDA receptor stability. Also plays a role in the exocytosis of arginine vasopressin hormone. The sequence is that of Rabphilin-3A (RPH3A) from Bos taurus (Bovine).